Consider the following 95-residue polypeptide: uncharacterized protein (95 aa).

A run of 2 repeats spans residues 67-74 and 85-92. The 2 X 8 AA approximate repeats stretch occupies residues 67 to 92; the sequence is GCGCGCGCATVAAVSPVPCGGCCGCG.

This is an uncharacterized protein from Caenorhabditis elegans.